The sequence spans 439 residues: ATP-dependent protease ATPase subunit HslU (439 aa).

ATP contacts are provided by residues isoleucine 17, glycine 59–glutamate 64, aspartate 251, glutamate 317, and arginine 389.

It belongs to the ClpX chaperone family. HslU subfamily. As to quaternary structure, a double ring-shaped homohexamer of HslV is capped on each side by a ring-shaped HslU homohexamer. The assembly of the HslU/HslV complex is dependent on binding of ATP.

The protein resides in the cytoplasm. Its function is as follows. ATPase subunit of a proteasome-like degradation complex; this subunit has chaperone activity. The binding of ATP and its subsequent hydrolysis by HslU are essential for unfolding of protein substrates subsequently hydrolyzed by HslV. HslU recognizes the N-terminal part of its protein substrates and unfolds these before they are guided to HslV for hydrolysis. The protein is ATP-dependent protease ATPase subunit HslU of Campylobacter jejuni subsp. jejuni serotype O:6 (strain 81116 / NCTC 11828).